A 125-amino-acid chain; its full sequence is Late histone H2A.1 (125 aa).

Basic residues predominate over residues 1–18; it reads MSGRGKGKAKGTKSKTRS. The tract at residues 1-21 is disordered; it reads MSGRGKGKAKGTKSKTRSSRA. Ser-2 carries the N-acetylserine modification. Position 2 is a phosphoserine (Ser-2). Gln-104 carries the post-translational modification N5-methylglutamine. Residue Lys-119 forms a Glycyl lysine isopeptide (Lys-Gly) (interchain with G-Cter in ubiquitin) linkage.

The protein belongs to the histone H2A family. As to quaternary structure, the nucleosome is a histone octamer containing two molecules each of H2A, H2B, H3 and H4 assembled in one H3-H4 heterotetramer and two H2A-H2B heterodimers. The octamer wraps approximately 147 bp of DNA. Monoubiquitination of Lys-119 gives a specific tag for epigenetic transcriptional repression. Post-translationally, phosphorylation of Ser-2 directly represses transcription.

The protein resides in the nucleus. Its subcellular location is the chromosome. Functionally, core component of nucleosome. Nucleosomes wrap and compact DNA into chromatin, limiting DNA accessibility to the cellular machineries which require DNA as a template. Histones thereby play a central role in transcription regulation, DNA repair, DNA replication and chromosomal stability. DNA accessibility is regulated via a complex set of post-translational modifications of histones, also called histone code, and nucleosome remodeling. In Psammechinus miliaris (Green sea urchin), this protein is Late histone H2A.1.